A 213-amino-acid polypeptide reads, in one-letter code: Lysozyme g-like protein 2 (213 aa).

Positions 1-19 (MVPSVVFWGLIALVGTAKG) are cleaved as a signal peptide. 2 disulfide bridges follow: C40-C93 and C54-C62. The active site involves E106.

This sequence belongs to the glycosyl hydrolase 23 family.

Its subcellular location is the secreted. In terms of biological role, may act as a potent antibacterial protein that may play a role in the innate immunity. This chain is Lysozyme g-like protein 2 (Lyg2), found in Mus musculus (Mouse).